The primary structure comprises 349 residues: N-acetyl-gamma-glutamyl-phosphate reductase (349 aa).

Residue C152 is part of the active site.

The protein belongs to the NAGSA dehydrogenase family. Type 1 subfamily.

It localises to the cytoplasm. The enzyme catalyses N-acetyl-L-glutamate 5-semialdehyde + phosphate + NADP(+) = N-acetyl-L-glutamyl 5-phosphate + NADPH + H(+). It participates in amino-acid biosynthesis; L-arginine biosynthesis; N(2)-acetyl-L-ornithine from L-glutamate: step 3/4. In terms of biological role, catalyzes the NADPH-dependent reduction of N-acetyl-5-glutamyl phosphate to yield N-acetyl-L-glutamate 5-semialdehyde. The sequence is that of N-acetyl-gamma-glutamyl-phosphate reductase from Clavibacter sepedonicus (Clavibacter michiganensis subsp. sepedonicus).